We begin with the raw amino-acid sequence, 440 residues long: Chromosome partition protein MukF (440 aa).

Residues 208 to 236 are leucine-zipper; it reads LSETSGTLRELQDTLEAAGDKLQANLLRI.

It belongs to the MukF family. Interacts, and probably forms a ternary complex, with MukE and MukB via its C-terminal region. The complex formation is stimulated by calcium or magnesium. It is required for an interaction between MukE and MukB.

It localises to the cytoplasm. The protein localises to the nucleoid. Its function is as follows. Involved in chromosome condensation, segregation and cell cycle progression. May participate in facilitating chromosome segregation by condensation DNA from both sides of a centrally located replisome during cell division. Not required for mini-F plasmid partitioning. Probably acts via its interaction with MukB and MukE. Overexpression results in anucleate cells. It has a calcium binding activity. The polypeptide is Chromosome partition protein MukF (Shigella boydii serotype 4 (strain Sb227)).